We begin with the raw amino-acid sequence, 295 residues long: Light-independent protochlorophyllide reductase iron-sulfur ATP-binding protein (295 aa).

ATP contacts are provided by residues 39 to 44 (GIGKST) and K68. Mg(2+) is bound at residue S43. 2 residues coordinate [4Fe-4S] cluster: C124 and C158. 209 to 210 (NR) contributes to the ATP binding site.

This sequence belongs to the NifH/BchL/ChlL family. Homodimer. Protochlorophyllide reductase is composed of three subunits; ChlL, ChlN and ChlB. [4Fe-4S] cluster serves as cofactor.

It catalyses the reaction chlorophyllide a + oxidized 2[4Fe-4S]-[ferredoxin] + 2 ADP + 2 phosphate = protochlorophyllide a + reduced 2[4Fe-4S]-[ferredoxin] + 2 ATP + 2 H2O. It participates in porphyrin-containing compound metabolism; chlorophyll biosynthesis (light-independent). Component of the dark-operative protochlorophyllide reductase (DPOR) that uses Mg-ATP and reduced ferredoxin to reduce ring D of protochlorophyllide (Pchlide) to form chlorophyllide a (Chlide). This reaction is light-independent. The L component serves as a unique electron donor to the NB-component of the complex, and binds Mg-ATP. In Prochlorococcus marinus (strain MIT 9515), this protein is Light-independent protochlorophyllide reductase iron-sulfur ATP-binding protein.